A 408-amino-acid chain; its full sequence is Arginine biosynthesis bifunctional protein ArgJ (408 aa).

6 residues coordinate substrate: Thr158, Lys184, Thr195, Glu281, Asn403, and Thr408. Thr195 serves as the catalytic Nucleophile.

Belongs to the ArgJ family. Heterotetramer of two alpha and two beta chains.

The protein resides in the cytoplasm. The enzyme catalyses N(2)-acetyl-L-ornithine + L-glutamate = N-acetyl-L-glutamate + L-ornithine. It catalyses the reaction L-glutamate + acetyl-CoA = N-acetyl-L-glutamate + CoA + H(+). It participates in amino-acid biosynthesis; L-arginine biosynthesis; L-ornithine and N-acetyl-L-glutamate from L-glutamate and N(2)-acetyl-L-ornithine (cyclic): step 1/1. It functions in the pathway amino-acid biosynthesis; L-arginine biosynthesis; N(2)-acetyl-L-ornithine from L-glutamate: step 1/4. In terms of biological role, catalyzes two activities which are involved in the cyclic version of arginine biosynthesis: the synthesis of N-acetylglutamate from glutamate and acetyl-CoA as the acetyl donor, and of ornithine by transacetylation between N(2)-acetylornithine and glutamate. The protein is Arginine biosynthesis bifunctional protein ArgJ of Shouchella clausii (strain KSM-K16) (Alkalihalobacillus clausii).